Consider the following 2359-residue polypeptide: Voltage-dependent T-type calcium channel subunit alpha-1H (2359 aa).

A disordered region spans residues 1–63 (MTEGTLAADE…PGTECGADLG (63 aa)). Over 1 to 100 (MTEGTLAADE…SWCLRLVCNP (100 aa)) the chain is Cytoplasmic. Residues 24 to 36 (APVRASPASPGAP) are compositionally biased toward low complexity. The stretch at 87-422 (TRPRSWCLRL…LCLVVIATQF (336 aa)) is one I repeat. The helical transmembrane segment at 101-119 (WFEHISMLVIMLNCVTLGM) threads the bilayer. At 120–141 (FRPCEDVECRSERCSILEAFDD) the chain is on the extracellular side. Aspartate 140 serves as a coordination point for Zn(2+). A helical transmembrane segment spans residues 142-160 (FIFAFFAVEMVIKMVALGL). The Cytoplasmic portion of the chain corresponds to 161 to 169 (FGQKCYLGD). The chain crosses the membrane as a helical span at residues 170-184 (TWNRLDFFIVMAGMM). Over 185–193 (EYSLDGHNV) the chain is Extracellular. Residues aspartate 189 and histidine 191 each contribute to the Zn(2+) site. N-linked (GlcNAc...) asparagine glycosylation occurs at asparagine 192. The helical transmembrane segment at 194 to 212 (SLSAIRTVRVLRPLRAINR) threads the bilayer. Residues 213–232 (VPSMRILVTLLLDTLPMLGN) are Cytoplasmic-facing. The chain crosses the membrane as a helical span at residues 233-253 (VLLLCFFVFFIFGIVGVQLWA). Topologically, residues 254-394 (GLLRNRCFLD…YYVMDAHSFY (141 aa)) are extracellular. N-linked (GlcNAc...) asparagine glycosylation is present at asparagine 271. Residues 395–419 (NFIYFILLIIMGSFFMINLCLVVIA) traverse the membrane as a helical segment. Residues 420–790 (TQFSETKQRE…GKLRRIVDSK (371 aa)) lie on the Cytoplasmic side of the membrane. 3 disordered regions span residues 490 to 573 (VDPS…SESV), 620 to 656 (GTVNSKGGTSSRPKGLRGAGAPGAAVHSPLSLGSPRP), and 737 to 769 (GDCRDPVQQPHEVGTPGHSNERRRTPLRKASQP). A compositionally biased stretch (basic residues) spans 503-532 (RRPRRAGRRTASVHHLVYHHHHHHHHHYHF). The span at 557–566 (PPSPPSPGHG) shows a compositional bias: pro residues. Over residues 620-631 (GTVNSKGGTSSR) the composition is skewed to polar residues. The stretch at 776-1015 (WASFSGKLRR…LLVAILVEGF (240 aa)) is one II repeat. The helical transmembrane segment at 791 to 811 (YFNRGIMAAILVNTLSMGVEY) threads the bilayer. The Extracellular segment spans residues 812-824 (HEQPEELTNALEI). The chain crosses the membrane as a helical span at residues 825–846 (SNIVFTSMFALEMLLKLLACGP). Over 847-852 (LGYIRN) the chain is Cytoplasmic. A helical membrane pass occupies residues 853–871 (PYNIFDGIVVVISVWEIVG). Residues 872–879 (QANGGLSV) are Extracellular-facing. The helical transmembrane segment at 880–903 (LRTFRLLRVLKLVRFLPALRRQLV) threads the bilayer. Over 904-914 (VLMRTMDNVAT) the chain is Cytoplasmic. Residues 915 to 935 (FCMLLMLFIFIFSILGMHLFG) form a helical membrane-spanning segment. Over 936–987 (CKFSLKTDSGDTVPDRKNFDSLLWAIVTVFQILTQEDWNVVLYNGMASTSSW) the chain is Extracellular. Residues 988 to 1012 (AALYFVALMTFGNYVLFNLLVAILV) form a helical membrane-spanning segment. Residues 1013 to 1301 (EGFQAEGDAT…NRLRVSCQKV (289 aa)) are Cytoplasmic-facing. The disordered stretch occupies residues 1061–1197 (GHLEGRGSLP…GASPGPRATP (137 aa)). Positions 1117 to 1126 (SLASLRSSPC) are enriched in polar residues. Residues 1130–1147 (GPNSAGSSRRSSWNSLGR) show a composition bias toward low complexity. The III repeat unit spans residues 1292-1569 (NRLRVSCQKV…MFVGVVVENF (278 aa)). A helical transmembrane segment spans residues 1302–1324 (IAHKMFDHVVLVFIFLNCITIAL). Residues 1325 to 1342 (ERPDIDPGSTERAFLSVS) lie on the Extracellular side of the membrane. Residues 1343 to 1363 (NYIFTAIFVVEMMVKVVALGL) form a helical membrane-spanning segment. Residues 1364–1373 (LWGEHAYLQS) lie on the Cytoplasmic side of the membrane. The helical transmembrane segment at 1374 to 1393 (SWNVLDGLLVLVSLVDIIVA) threads the bilayer. At 1394–1407 (MASAGGAKILGVLR) the chain is on the extracellular side. The helical transmembrane segment at 1408–1429 (VLRLLRTLRPLRVISRAPGLKL) threads the bilayer. The Cytoplasmic segment spans residues 1430-1439 (VVETLISSLR). The helical transmembrane segment at 1440–1463 (PIGNIVLICCAFFIIFGILGVQLF) threads the bilayer. The Extracellular portion of the chain corresponds to 1464 to 1540 (KGKFYYCEGT…DQQPVQNHNP (77 aa)). N-linked (GlcNAc...) asparagine glycosylation is present at asparagine 1477. A helical membrane pass occupies residues 1541 to 1566 (WMLLYFISFLLIVSFFVLNMFVGVVV). The Cytoplasmic segment spans residues 1567 to 1621 (ENFHKCRQHQEAEEARRREEKRLRRLERRRRKAQRRPYYADYSHTRRSIHSLCTS). An IV repeat occupies 1607 to 1868 (DYSHTRRSIH…VVVAVLMKHL (262 aa)). A helical membrane pass occupies residues 1622-1642 (HYLDLFITFIICLNVITMSME). Over 1643-1656 (HYNQPKSLDEALKY) the chain is Extracellular. Residues 1657 to 1678 (CNYVFTIVFVFEAALKLVAFGF) form a helical membrane-spanning segment. At 1679-1685 (RRFFKDR) the chain is on the cytoplasmic side. Residues 1686–1704 (WNQLDLAIVLLSIMGIALE) form a helical membrane-spanning segment. Topologically, residues 1705 to 1718 (EIEMNAALPINPTI) are extracellular. The chain crosses the membrane as a helical span at residues 1719–1742 (IRIMRVLRIARVLKLLKMATGMRA). Over 1743-1756 (LLDTVVQALPQVGN) the chain is Cytoplasmic. The chain crosses the membrane as a helical span at residues 1757–1777 (LGLLFMLLFFIYAALGVELFG). Residues 1778-1840 (RLECSEDNPC…KHCLSYLPAL (63 aa)) are Extracellular-facing. A helical membrane pass occupies residues 1841-1868 (SPVYFVTFMLVAQFVLVNVVVAVLMKHL). Topologically, residues 1869–2359 (EESNKEARED…APDDSGDEPV (491 aa)) are cytoplasmic. The span at 1891-1911 (QGSTAQPPPTAQESQGTQPDT) shows a compositional bias: polar residues. 4 disordered regions span residues 1891 to 1913 (QGSTAQPPPTAQESQGTQPDTPN), 1974 to 2003 (SFQVPSAASSPARVSDPLCALSPRGTPRSL), 2016 to 2258 (HSES…GERW), and 2335 to 2359 (PQTPLKKPGSTPATPAPDDSGDEPV). Positions 2016–2026 (HSESLEGKVDD) are enriched in basic and acidic residues. The segment covering 2086-2096 (DEAEAADPADE) has biased composition (acidic residues). The span at 2166 to 2181 (GESHLESGEVRGRASE) shows a compositional bias: basic and acidic residues.

It belongs to the calcium channel alpha-1 subunit (TC 1.A.1.11) family. CACNA1H subfamily. In terms of assembly, interacts (via N-terminal cytoplasmic domain) with STAC. Post-translationally, in response to raising of intracellular calcium, the T-type channels are activated by CaM-kinase II. Expressed in brain.

It is found in the cell membrane. The catalysed reaction is Ca(2+)(in) = Ca(2+)(out). Voltage-sensitive calcium channel that gives rise to T-type calcium currents. T-type calcium channels belong to the 'low-voltage activated (LVA)' group. A particularity of this type of channel is an opening at quite negative potentials, and a voltage-dependent inactivation. T-type channels serve pacemaking functions in both central neurons and cardiac nodal cells and support calcium signaling in secretory cells and vascular smooth muscle. They may also be involved in the modulation of firing patterns of neurons. In the adrenal zona glomerulosa, participates in the signaling pathway leading to aldosterone production in response to either AGT/angiotensin II, or hyperkalemia. This chain is Voltage-dependent T-type calcium channel subunit alpha-1H (Cacna1h), found in Rattus norvegicus (Rat).